The chain runs to 340 residues: MNENLDPTNQKYNPEELDLEKKLRPLSFDDFTGQEQVLENLKIFVQAANLRGEALDHTLFHGPPGLGKTTLANILANELGVGIKITSGPVLDKPGDLAGLLTNLDERDVLFIDEIHRLSPIVEEYLYSAMEDFKIDIMIESGPNARSVQINLSPFTLVGATTRSGLLTAPMRARFGIQSRLQYYNAELLTTIVQRSSSILKMPITMEAAIEIAGRSRGTPRIANAMLRRVRDFAQIKGNGSIDIEIAKFALNALHVDAHGLDEMDNKILNTIIDKFKGGPVGLSTLATAVSESSETIEEVYEPFLIQEGFIMRTPRGREVTEKAYKHLGKVKANVQGGLF.

Residues 1–184 (MNENLDPTNQ…FGIQSRLQYY (184 aa)) are large ATPase domain (RuvB-L). ATP contacts are provided by residues Leu23, Arg24, Gly65, Lys68, Thr69, Thr70, 131 to 133 (EDF), Arg174, Tyr184, and Arg221. Thr69 provides a ligand contact to Mg(2+). The interval 185–255 (NAELLTTIVQ…IAKFALNALH (71 aa)) is small ATPAse domain (RuvB-S). The interval 258–340 (AHGLDEMDNK…VKANVQGGLF (83 aa)) is head domain (RuvB-H). DNA contacts are provided by Arg313 and Arg318.

This sequence belongs to the RuvB family. Homohexamer. Forms an RuvA(8)-RuvB(12)-Holliday junction (HJ) complex. HJ DNA is sandwiched between 2 RuvA tetramers; dsDNA enters through RuvA and exits via RuvB. An RuvB hexamer assembles on each DNA strand where it exits the tetramer. Each RuvB hexamer is contacted by two RuvA subunits (via domain III) on 2 adjacent RuvB subunits; this complex drives branch migration. In the full resolvosome a probable DNA-RuvA(4)-RuvB(12)-RuvC(2) complex forms which resolves the HJ.

It localises to the cytoplasm. It catalyses the reaction ATP + H2O = ADP + phosphate + H(+). The RuvA-RuvB-RuvC complex processes Holliday junction (HJ) DNA during genetic recombination and DNA repair, while the RuvA-RuvB complex plays an important role in the rescue of blocked DNA replication forks via replication fork reversal (RFR). RuvA specifically binds to HJ cruciform DNA, conferring on it an open structure. The RuvB hexamer acts as an ATP-dependent pump, pulling dsDNA into and through the RuvAB complex. RuvB forms 2 homohexamers on either side of HJ DNA bound by 1 or 2 RuvA tetramers; 4 subunits per hexamer contact DNA at a time. Coordinated motions by a converter formed by DNA-disengaged RuvB subunits stimulates ATP hydrolysis and nucleotide exchange. Immobilization of the converter enables RuvB to convert the ATP-contained energy into a lever motion, pulling 2 nucleotides of DNA out of the RuvA tetramer per ATP hydrolyzed, thus driving DNA branch migration. The RuvB motors rotate together with the DNA substrate, which together with the progressing nucleotide cycle form the mechanistic basis for DNA recombination by continuous HJ branch migration. Branch migration allows RuvC to scan DNA until it finds its consensus sequence, where it cleaves and resolves cruciform DNA. This chain is Holliday junction branch migration complex subunit RuvB, found in Flavobacterium psychrophilum (strain ATCC 49511 / DSM 21280 / CIP 103535 / JIP02/86).